Consider the following 470-residue polypeptide: tRNA-2-methylthio-N(6)-dimethylallyladenosine synthase (470 aa).

Residues 20–138 (PRVHIETFGC…LPELVERARS (119 aa)) form the MTTase N-terminal domain. The [4Fe-4S] cluster site is built by Cys29, Cys65, Cys99, Cys176, Cys180, and Cys183. One can recognise a Radical SAM core domain in the interval 162 to 398 (REGDLKAWVT…MEVQNRIARA (237 aa)). The TRAM domain maps to 401 to 464 (EARVGKVYDI…TWTLEGELVE (64 aa)).

It belongs to the methylthiotransferase family. MiaB subfamily. As to quaternary structure, monomer. Requires [4Fe-4S] cluster as cofactor.

The protein localises to the cytoplasm. The catalysed reaction is N(6)-dimethylallyladenosine(37) in tRNA + (sulfur carrier)-SH + AH2 + 2 S-adenosyl-L-methionine = 2-methylsulfanyl-N(6)-dimethylallyladenosine(37) in tRNA + (sulfur carrier)-H + 5'-deoxyadenosine + L-methionine + A + S-adenosyl-L-homocysteine + 2 H(+). Catalyzes the methylthiolation of N6-(dimethylallyl)adenosine (i(6)A), leading to the formation of 2-methylthio-N6-(dimethylallyl)adenosine (ms(2)i(6)A) at position 37 in tRNAs that read codons beginning with uridine. This chain is tRNA-2-methylthio-N(6)-dimethylallyladenosine synthase, found in Symbiobacterium thermophilum (strain DSM 24528 / JCM 14929 / IAM 14863 / T).